The following is a 715-amino-acid chain: MTTESLLIELLTEELPPKSLVKLGNAFATLIADSLKQQYLTTPDTVSTVFASPRRLAVHLTAISVQAPDQIVTLKLMPVAVGLDAQGQPTPALHKKLAALGVENVAVSALKRVQEGKAEMLFLEQSVTGILLAAGLQKAVDEAIRQLPVAKMMTYQLDDGWENVHFIRPAHGLIALHGQQIVPISALGFAAGNTTRGHRFEAKQAELVIDHADHYEYILETEGTVIPGFDRRRSRIREGLETATRAAQLQCIEDAALLDEVTALVERPNVLMGTFSADFLEVPQECLISTMKINQKYFPLLDADGKLTNRFLIVSNITPADPGQIIAGNERVIRSRLADAKFFFDHDRKRTLASRLPDLDKVIYHHQLGSQGERTRYVRALAQIIGQLLDNGDLPAQANQAAMLAKADLLTDMVGEFPELQGIMGRYYAQREGVDETIAFAIEDHYKPRFAGDALPRSMTGICVALADKLETLISLFSIGQFPTGDKDPYALRRHALGVIRILIEKDLPIGLDVLISRAAGVLRDEISGEQGPESSHARPVTPQLTEQLQDFFYDRLASSLRDQGYTVQEVESVLNLRPSLLCEIPRRLAAVRAFTALPEAASLAAANKRVSNILKKSEFDATVSIDKACLQAPAEIALYRALSEIESDARHAFQKGDYVTALQMLAALKAPIDAFFDQVMVNDENEVLRRNRLALLAALQATMNRVADISRLAA.

Belongs to the class-II aminoacyl-tRNA synthetase family. As to quaternary structure, tetramer of two alpha and two beta subunits.

It localises to the cytoplasm. It carries out the reaction tRNA(Gly) + glycine + ATP = glycyl-tRNA(Gly) + AMP + diphosphate. The chain is Glycine--tRNA ligase beta subunit from Nitrosomonas eutropha (strain DSM 101675 / C91 / Nm57).